The chain runs to 302 residues: Protein ECM11 (302 aa).

Disordered stretches follow at residues 1–67 (MTVI…TDKQ) and 162–187 (SLNG…GSYQ). A compositionally biased stretch (polar residues) spans 35-46 (NKPPSSINSRSG). Basic and acidic residues predominate over residues 56–67 (APEKKINNTDKQ). Polar residues predominate over residues 162–171 (SLNGENTSSP).

As to quaternary structure, interacts with CDC6.

The protein resides in the nucleus. Its function is as follows. May be involved in cell wall organization and biogenesis. This is Protein ECM11 (ECM11) from Saccharomyces cerevisiae (strain ATCC 204508 / S288c) (Baker's yeast).